The primary structure comprises 1170 residues: Cellulose synthase-like protein D2 (1170 aa).

2 disordered regions span residues 1–75 (MASN…PESG) and 269–295 (NEVDNGGGGGGGGGLGGGDGQPAEFTS). A compositionally biased stretch (low complexity) spans 10 to 24 (RHSNSSRLSRMSYSG). A compositionally biased stretch (gly residues) spans 273-288 (NGGGGGGGGGLGGGDG). 2 helical membrane-spanning segments follow: residues 311 to 331 (VLSPYRLLILIRMAVLGLFLA) and 341 to 361 (AMWLWGMSVVCELWFGLSWLL). The active site involves Asp-441. Residues 527–551 (HAREEIKAMKRQREAALDDVVEAVK) are a coiled coil. Asp-873 is a catalytic residue. A run of 6 helical transmembrane segments spans residues 955–975 (IFLIVYCFLPALSLFSGQFIV), 981–1001 (TFLTYLLVITLTMCMLAVLEI), 1027–1047 (LAAVLQGLLKVIAGIEISFTL), 1070–1090 (SLMIPPIVIMMVNLIAIAVGF), 1104–1124 (LLGGVFFSFWVLAHLYPFAKG), and 1134–1154 (TIVFVWSGLLAITISLLWVAI).

The protein belongs to the glycosyltransferase 2 family. Plant cellulose synthase-like D subfamily.

The protein resides in the golgi apparatus membrane. Functionally, thought to be a Golgi-localized beta-glycan synthase that polymerize the backbones of noncellulosic polysaccharides (hemicelluloses) of plant cell wall. This chain is Cellulose synthase-like protein D2 (CSLD2), found in Oryza sativa subsp. indica (Rice).